The following is a 307-amino-acid chain: HPr kinase/phosphorylase (307 aa).

Active-site residues include H136 and K157. 151-158 (GESGIGKS) serves as a coordination point for ATP. S158 contributes to the Mg(2+) binding site. Residue D175 is the Proton acceptor; for phosphorylation activity. Proton donor; for dephosphorylation activity of the active site. The interval 198–207 (LEVRGMGIID) is important for the catalytic mechanism of both phosphorylation and dephosphorylation. E199 contributes to the Mg(2+) binding site. R240 is a catalytic residue. An important for the catalytic mechanism of dephosphorylation region spans residues 261-266 (PIRPGR).

Belongs to the HPrK/P family. As to quaternary structure, homohexamer. Mg(2+) is required as a cofactor.

The enzyme catalyses [HPr protein]-L-serine + ATP = [HPr protein]-O-phospho-L-serine + ADP + H(+). It carries out the reaction [HPr protein]-O-phospho-L-serine + phosphate + H(+) = [HPr protein]-L-serine + diphosphate. Its function is as follows. Catalyzes the ATP- as well as the pyrophosphate-dependent phosphorylation of a specific serine residue in HPr, a phosphocarrier protein of the phosphoenolpyruvate-dependent sugar phosphotransferase system (PTS). HprK/P also catalyzes the pyrophosphate-producing, inorganic phosphate-dependent dephosphorylation (phosphorolysis) of seryl-phosphorylated HPr (P-Ser-HPr). The two antagonistic activities of HprK/P are regulated by several intracellular metabolites, which change their concentration in response to the absence or presence of rapidly metabolisable carbon sources (glucose, fructose, etc.) in the growth medium. Therefore, by controlling the phosphorylation state of HPr, HPrK/P is a sensor enzyme that plays a major role in the regulation of carbon metabolism and sugar transport: it mediates carbon catabolite repression (CCR), and regulates PTS-catalyzed carbohydrate uptake and inducer exclusion. The sequence is that of HPr kinase/phosphorylase from Clostridium perfringens (strain ATCC 13124 / DSM 756 / JCM 1290 / NCIMB 6125 / NCTC 8237 / Type A).